The primary structure comprises 955 residues: UPF0182 protein tll1193 (955 aa).

Helical transmembrane passes span 6-26 (VVPL…AIAL), 53-73 (WSVQ…FYGC), 98-118 (GLGL…LIVA), 163-183 (WLLG…VGLF), 186-206 (LGIL…PVVL), 240-260 (LWLV…YLLA), 280-300 (LQGL…LERY), 324-344 (LYGW…WSAI), and 354-374 (GPIA…ILIV).

This sequence belongs to the UPF0182 family.

The protein resides in the cell membrane. The polypeptide is UPF0182 protein tll1193 (Thermosynechococcus vestitus (strain NIES-2133 / IAM M-273 / BP-1)).